A 3411-amino-acid chain; its full sequence is Genome polyprotein (3411 aa).

Residues 1 to 104 (MSGRKAQGKT…LSSRKRRSHD (104 aa)) lie on the Cytoplasmic side of the membrane. A hydrophobic; homodimerization of capsid protein C region spans residues 38–72 (PGPSRGVQGFIFFFLFNILTGKKITAHLKRLWKML). Positions 102-121 (SHDVLTVQFLILGMLLMTGG) are cleaved as a propeptide — ER anchor for the capsid protein C, removed in mature form by serine protease NS3. A helical membrane pass occupies residues 105-125 (VLTVQFLILGMLLMTGGVTLV). The Extracellular portion of the chain corresponds to 126–244 (RKNRWLLLNV…GERQLQKIER (119 aa)). 2 N-linked (GlcNAc...) asparagine; by host glycosylation sites follow: asparagine 134 and asparagine 150. The chain crosses the membrane as a helical span at residues 245 to 265 (WLVRNPFFAVTALTIAYLVGS). Residues 266-270 (NMTQR) lie on the Cytoplasmic side of the membrane. The helical transmembrane segment at 271–285 (VVIALLVLAVGPAYS) threads the bilayer. Residues 286–730 (AHCIGITDRD…TVFGSAFQGL (445 aa)) are Extracellular-facing. Intrachain disulfides connect cysteine 288–cysteine 315, cysteine 345–cysteine 401, cysteine 345–cysteine 406, cysteine 359–cysteine 390, cysteine 377–cysteine 401, cysteine 377–cysteine 406, cysteine 467–cysteine 568, and cysteine 585–cysteine 615. The segment at 383–396 (DRGWGNGCGLFGKG) is fusion peptide. A helical membrane pass occupies residues 731 to 751 (FGGLNWITKVIMGAVLIWVGI). Residues 752-757 (NTRNMT) are Extracellular-facing. The helical transmembrane segment at 758–778 (MSMSMILVGVIMMFLSLGVGA) threads the bilayer. At 779–1132 (DQGCAINFGK…LVRSWVTAGE (354 aa)) the chain is on the extracellular side. 6 cysteine pairs are disulfide-bonded: cysteine 782/cysteine 793, cysteine 833/cysteine 921, cysteine 957/cysteine 1002, cysteine 1058/cysteine 1107, cysteine 1069/cysteine 1091, and cysteine 1090/cysteine 1094. 2 N-linked (GlcNAc...) asparagine; by host glycosylation sites follow: asparagine 908 and asparagine 986. A helical membrane pass occupies residues 1133–1153 (IHAVPFGLVSMMIAMEVVLRK). The Cytoplasmic segment spans residues 1154 to 1201 (RQGPKQMLVGGVVLLGAMLVGQVTLLDLLKLTVAVGLHFHEMNNGGDA). Residues 1202–1222 (MYMALIAAFSIRPGLLIGFGL) form a helical membrane-spanning segment. Residues 1223–1287 (RTLWSPRERL…ILPLMALLTP (65 aa)) are Lumenal-facing. A helical membrane pass occupies residues 1288–1308 (VTMAEVRLATMLFCTVVIIGV). At 1309-1355 (LHQNSKDTSMQKTIPLVALTLTSYLGLTQPFLGLCAFLATRIFGRRS) the chain is on the cytoplasmic side. The helical transmembrane segment at 1356-1376 (IPVNEALAAAGLVGVLAGLAF) threads the bilayer. Residues 1377–1378 (QE) are Lumenal-facing. The helical transmembrane segment at 1379–1399 (MENFLGPIAVGGILMMLVSVA) threads the bilayer. The Cytoplasmic segment spans residues 1400 to 1456 (GRVDGLELKKLGEVSWEEEAEISGSSARYDVALSEQGEFKLLSEEKVPWDQVVMTSL). The interval 1407–1446 (LKKLGEVSWEEEAEISGSSARYDVALSEQGEFKLLSEEKV) is interacts with and activates NS3 protease. The helical intramembrane region spans 1457 to 1477 (ALVGAAIHPFALLLVLAGWLF). Topologically, residues 1478–2157 (HVRGARRSGD…RNALSMMPEA (680 aa)) are cytoplasmic. The 181-residue stretch at 1485–1665 (SGDVLWDIPT…EVKEEGKEEL (181 aa)) folds into the Peptidase S7 domain. Residues histidine 1537, aspartate 1561, and serine 1622 each act as charge relay system; for serine protease NS3 activity in the active site. The region spanning 1669–1825 (PTMLKKGMTT…HSNGEIEDVQ (157 aa)) is the Helicase ATP-binding domain. The important for RNA-binding stretch occupies residues 1673–1676 (KKGM). Position 1682–1689 (1682–1689 (FHPGAGKT)) interacts with ATP. The DEAH box signature appears at 1773-1776 (DEAH). The Helicase C-terminal domain maps to 1820-1997 (EIEDVQTDIP…VRGGMVAPLY (178 aa)). An N6-acetyllysine; by host modification is found at lysine 1877. Residues 1942–1961 (AAQRRGRIGRNPNRDGDSYY) form a disordered region. The helical transmembrane segment at 2158–2178 (MTIVMLFILAGLLTSGMVIFF) threads the bilayer. The Lumenal portion of the chain corresponds to 2179–2186 (MSPKGISR). The helical intramembrane region spans 2187-2207 (MSMAMGTMAGCGYLMFLGGVK). The Lumenal segment spans residues 2208–2209 (PT). The helical transmembrane segment at 2210-2230 (HISYIMLIFFVLMVVVIPEPG) threads the bilayer. Topologically, residues 2231-2241 (QQRSIQDNQVA) are cytoplasmic. The helical transmembrane segment at 2242 to 2262 (YLIIGILTLVSVVAANELGML) threads the bilayer. Residues 2263–2293 (EKTKEDLFGKKNLIPSSASPWSWPDLDLKPG) lie on the Lumenal side of the membrane. Residues 2294-2314 (AAWTVYVGIVTMLSPMLHHWI) constitute an intramembrane region (helical). Topologically, residues 2315 to 2360 (KVEYGNLSLSGIAQSASVLSFMDKGIPFMKMNISVIILLVSGWNSI) are lumenal. The helical transmembrane segment at 2361–2380 (TVMPLLCGIGCAMLHWSLIL) threads the bilayer. Residues 2381 to 2421 (PGIKAQQSKLAQRRVFHGVAKNPVVDGNPTVDIEEAPEMPA) lie on the Cytoplasmic side of the membrane. A helical membrane pass occupies residues 2422–2442 (LYEKKLALYLLLALSLASVAM). Topologically, residues 2443–2445 (CRT) are lumenal. Residues 2446 to 2466 (PFSLAEGIVLASAALGPLIEG) form a helical membrane-spanning segment. Residues 2467-3411 (NTSLLWNGPM…DADLQPGELI (945 aa)) lie on the Cytoplasmic side of the membrane. The region spanning 2507-2771 (GSANGKTLGE…DVILPIGTRS (265 aa)) is the mRNA cap 0-1 NS5-type MT domain. An S-adenosyl-L-methionine-binding site is contributed by serine 2562. Serine 2562 is subject to Phosphoserine. The For 2'-O-MTase activity role is filled by lysine 2567. The S-adenosyl-L-methionine site is built by glycine 2592, tryptophan 2593, threonine 2610, leucine 2611, aspartate 2637, and isoleucine 2638. Residue aspartate 2652 is the For 2'-O-MTase activity of the active site. Position 2653 (isoleucine 2653) interacts with S-adenosyl-L-methionine. Residues lysine 2688 and glutamate 2724 each act as for 2'-O-MTase activity in the active site. Tyrosine 2726 provides a ligand contact to S-adenosyl-L-methionine. The Nuclear localization signal signature appears at 2878–2911 (RKIMKVVNRWLFRHLAREKNPRLCTKEEFIAKVR). Zn(2+)-binding residues include glutamate 2945, histidine 2949, cysteine 2954, and cysteine 2957. In terms of domain architecture, RdRp catalytic spans 3035–3187 (GGFYADDTAG…RPIDDRFGLA (153 aa)). Residues histidine 3222, cysteine 3238, and cysteine 3357 each coordinate Zn(2+).

The protein in the N-terminal section; belongs to the class I-like SAM-binding methyltransferase superfamily. mRNA cap 0-1 NS5-type methyltransferase family. In terms of assembly, homodimer. Interacts (via N-terminus) with host EXOC1 (via C-terminus); this interaction results in EXOC1 degradation through the proteasome degradation pathway. As to quaternary structure, forms heterodimers with envelope protein E in the endoplasmic reticulum and Golgi. Homodimer; in the endoplasmic reticulum and Golgi. Interacts with protein prM. Interacts with non-structural protein 1. In terms of assembly, homodimer; Homohexamer when secreted. Interacts with envelope protein E. NS1 interacts with NS4B. Interacts with host complement protein CFH; this interaction leads to the degradation of C3. As to quaternary structure, interacts (via N-terminus) with serine protease NS3. Forms a heterodimer with serine protease NS3. May form homooligomers. In terms of assembly, forms a heterodimer with NS2B. Interacts with non-structural protein 2A (via N-terminus). Interacts with NS4B. Interacts with unphosphorylated RNA-directed RNA polymerase NS5; this interaction stimulates RNA-directed RNA polymerase NS5 guanylyltransferase activity. NS3 interacts with host PDCD6IP; this interaction contributes to virion release. As to quaternary structure, interacts with serine protease NS3. Homodimer. Interacts with host STAT2; this interaction prevents the establishment of cellular antiviral state. Interacts with serine protease NS3. Interacts with host TRIM23; this interaction leads to NS5 ubiquitination. Post-translationally, specific enzymatic cleavages in vivo yield mature proteins. The nascent capsid protein C contains a C-terminal hydrophobic domain that act as a signal sequence for translocation of prM into the lumen of the ER. Mature capsid protein C is cleaved at a site upstream of this hydrophobic domain by NS3. prM is cleaved in post-Golgi vesicles by a host furin, releasing the mature small envelope protein M, and peptide pr. Non-structural protein 2A-alpha, a C-terminally truncated form of non-structural protein 2A, results from partial cleavage by NS3. Specific enzymatic cleavages in vivo yield mature proteins peptide 2K acts as a signal sequence and is removed from the N-terminus of NS4B by the host signal peptidase in the ER lumen. Signal cleavage at the 2K-4B site requires a prior NS3 protease-mediated cleavage at the 4A-2K site. In terms of processing, cleaved in post-Golgi vesicles by a host furin, releasing the mature small envelope protein M, and peptide pr. This cleavage is incomplete as up to 30% of viral particles still carry uncleaved prM. N-glycosylated. Post-translationally, N-glycosylated. The excreted form is glycosylated and this is required for efficient secretion of the protein from infected cells. In terms of processing, polyubiquitinated; ubiquitination is probably mediated by host TRIM23 and is prerequisite for NS5-STAT2 interaction. NS5 is not ISGylated or sumoylated. Acetylated by host KAT5. Acetylation modulates NS3 RNA-binding and unwinding activities and plays an important positive role for viral replication. Post-translationally, phosphorylated on serines residues. This phosphorylation may trigger NS5 nuclear localization.

It localises to the virion. The protein resides in the host nucleus. It is found in the host cytoplasm. The protein localises to the host perinuclear region. Its subcellular location is the secreted. It localises to the virion membrane. The protein resides in the host endoplasmic reticulum membrane. It catalyses the reaction Selective hydrolysis of -Xaa-Xaa-|-Yaa- bonds in which each of the Xaa can be either Arg or Lys and Yaa can be either Ser or Ala.. The catalysed reaction is RNA(n) + a ribonucleoside 5'-triphosphate = RNA(n+1) + diphosphate. The enzyme catalyses a ribonucleoside 5'-triphosphate + H2O = a ribonucleoside 5'-diphosphate + phosphate + H(+). It carries out the reaction ATP + H2O = ADP + phosphate + H(+). It catalyses the reaction a 5'-end (5'-triphosphoguanosine)-ribonucleoside in mRNA + S-adenosyl-L-methionine = a 5'-end (N(7)-methyl 5'-triphosphoguanosine)-ribonucleoside in mRNA + S-adenosyl-L-homocysteine. The catalysed reaction is a 5'-end (N(7)-methyl 5'-triphosphoguanosine)-ribonucleoside in mRNA + S-adenosyl-L-methionine = a 5'-end (N(7)-methyl 5'-triphosphoguanosine)-(2'-O-methyl-ribonucleoside) in mRNA + S-adenosyl-L-homocysteine + H(+). Its function is as follows. Plays a role in virus budding by binding to the cell membrane and gathering the viral RNA into a nucleocapsid that forms the core of a mature virus particle. During virus entry, may induce genome penetration into the host cytoplasm after hemifusion induced by the surface proteins. Can migrate to the cell nucleus where it modulates host functions. Inhibits RNA silencing by interfering with host Dicer. In terms of biological role, prevents premature fusion activity of envelope proteins in trans-Golgi by binding to envelope protein E at pH6.0. After virion release in extracellular space, gets dissociated from E dimers. Functionally, acts as a chaperone for envelope protein E during intracellular virion assembly by masking and inactivating envelope protein E fusion peptide. prM is the only viral peptide matured by host furin in the trans-Golgi network probably to avoid catastrophic activation of the viral fusion activity in acidic Golgi compartment prior to virion release. prM-E cleavage is inefficient, and many virions are only partially matured. These uncleaved prM would play a role in immune evasion. Its function is as follows. May play a role in virus budding. Exerts cytotoxic effects by activating a mitochondrial apoptotic pathway through M ectodomain. May display a viroporin activity. Binds to host cell surface receptor and mediates fusion between viral and cellular membranes. Envelope protein is synthesized in the endoplasmic reticulum in the form of heterodimer with protein prM. They play a role in virion budding in the ER, and the newly formed immature particle is covered with 60 spikes composed of heterodimer between precursor prM and envelope protein E. The virion is transported to the Golgi apparatus where the low pH causes dissociation of PrM-E heterodimers and formation of E homodimers. prM-E cleavage is inefficient, and many virions are only partially matured. These uncleaved prM would play a role in immune evasion. In terms of biological role, involved in immune evasion, pathogenesis and viral replication. Once cleaved off the polyprotein, is targeted to three destinations: the viral replication cycle, the plasma membrane and the extracellular compartment. Essential for viral replication. Required for formation of the replication complex and recruitment of other non-structural proteins to the ER-derived membrane structures. Excreted as a hexameric lipoparticle that plays a role against host immune response. Antagonizing the complement function. Binds to the host macrophages and dendritic cells. Inhibits signal transduction originating from Toll-like receptor 3 (TLR3). Functionally, component of the viral RNA replication complex that functions in virion assembly and antagonizes the host immune response. Its function is as follows. Required cofactor for the serine protease function of NS3. May have membrane-destabilizing activity and form viroporins. Displays three enzymatic activities: serine protease, NTPase and RNA helicase. NS3 serine protease, in association with NS2B, performs its autocleavage and cleaves the polyprotein at dibasic sites in the cytoplasm: C-prM, NS2A-NS2B, NS2B-NS3, NS3-NS4A, NS4A-2K and NS4B-NS5. NS3 RNA helicase binds RNA and unwinds dsRNA in the 3' to 5' direction. Also plays a role in virus assembly. In terms of biological role, regulates the ATPase activity of the NS3 helicase activity. NS4A allows NS3 helicase to conserve energy during unwinding. Functionally, functions as a signal peptide for NS4B and is required for the interferon antagonism activity of the latter. Its function is as follows. Induces the formation of ER-derived membrane vesicles where the viral replication takes place. Inhibits interferon (IFN)-induced host STAT1 phosphorylation and nuclear translocation, thereby preventing the establishment of cellular antiviral state by blocking the IFN-alpha/beta pathway. Replicates the viral (+) and (-) RNA genome, and performs the capping of genomes in the cytoplasm. NS5 methylates viral RNA cap at guanine N-7 and ribose 2'-O positions. Besides its role in RNA genome replication, also prevents the establishment of cellular antiviral state by blocking the interferon-alpha/beta (IFN-alpha/beta) signaling pathway. IFN-I induces binding of NS5 to host IFN-activated transcription factor STAT2, preventing its transcriptional activity. Host TRIM23 is the E3 ligase that interacts with and polyubiquitinates NS5 to promote its binding to STAT2 and trigger IFN-I signaling inhibition. The sequence is that of Genome polyprotein from Yellow fever virus (strain Ghana/Asibi/1927) (YFV).